The sequence spans 235 residues: Putative cobalt transport protein CbiM 2 (235 aa).

7 helical membrane passes run 9-29 (PAGW…MGII), 41-61 (YLPL…LKLP), 80-100 (FGYC…ALLL), 107-127 (TMGA…YAVY), 135-155 (INIY…TYII), 160-180 (LALA…AFFS), and 181-201 (IFAI…ALVF).

This sequence belongs to the CbiM family. Forms an energy-coupling factor (ECF) transporter complex composed of an ATP-binding protein (A component, CbiO), a transmembrane protein (T component, CbiQ) and 2 possible substrate-capture proteins (S components, CbiM and CbiN) of unknown stoichimetry.

Its subcellular location is the cell membrane. Its pathway is cofactor biosynthesis; adenosylcobalamin biosynthesis. Its function is as follows. Part of the energy-coupling factor (ECF) transporter complex CbiMNOQ involved in cobalt import. The polypeptide is Putative cobalt transport protein CbiM 2 (Methanosphaerula palustris (strain ATCC BAA-1556 / DSM 19958 / E1-9c)).